A 245-amino-acid polypeptide reads, in one-letter code: Spore membrane assembly protein 1 (245 aa).

In terms of biological role, involved in spore and ascus formation. Required for the efficient assembly of the precursors of the prospore membrane to a continuous prospore membrane. The protein is Spore membrane assembly protein 1 (SMA1) of Saccharomyces cerevisiae (strain ATCC 204508 / S288c) (Baker's yeast).